Here is a 126-residue protein sequence, read N- to C-terminus: Putative lipoprotein LprD (126 aa).

An N-terminal signal peptide occupies residues 1-19; the sequence is MSTTRRRRPALVALVTIAA. Cys20 carries N-palmitoyl cysteine lipidation. Cys20 is lipidated: S-diacylglycerol cysteine. The helical transmembrane segment at 44-64 threads the bilayer; the sequence is GYALQWPLFAGFCLYTYHNFV.

To M.tuberculosis Rv1343c.

The protein resides in the cell membrane. The sequence is that of Putative lipoprotein LprD (lprD) from Mycobacterium leprae (strain TN).